The sequence spans 472 residues: Dihydrolipoyl dehydrogenase 2 (472 aa).

FAD is bound by residues 39-47, lysine 56, and alanine 118; that span reads ERDAYGGTC. A disulfide bridge connects residues cysteine 47 and cysteine 52. NAD(+) contacts are provided by residues 186–190, glutamate 209, and 275–278; these read GAGYI and AVGR. The FAD site is built by aspartate 318 and alanine 326. The Proton acceptor role is filled by histidine 450.

It belongs to the class-I pyridine nucleotide-disulfide oxidoreductase family. As to quaternary structure, homodimer. Requires FAD as cofactor.

The protein resides in the cytoplasm. The catalysed reaction is N(6)-[(R)-dihydrolipoyl]-L-lysyl-[protein] + NAD(+) = N(6)-[(R)-lipoyl]-L-lysyl-[protein] + NADH + H(+). This Haloarcula marismortui (strain ATCC 43049 / DSM 3752 / JCM 8966 / VKM B-1809) (Halobacterium marismortui) protein is Dihydrolipoyl dehydrogenase 2 (lpdA2).